The sequence spans 321 residues: GDP-L-fucose synthase (321 aa).

Residue 14 to 20 (GGSGLVG) coordinates NADP(+). The active-site Proton donor/acceptor is Y143. NADP(+) is bound by residues K147, 170–173 (PTNV), and H186. Substrate is bound by residues K194, W208, R215, and D277.

The protein belongs to the NAD(P)-dependent epimerase/dehydratase family. Fucose synthase subfamily. Homodimer.

The catalysed reaction is GDP-beta-L-fucose + NADP(+) = GDP-4-dehydro-alpha-D-rhamnose + NADPH + H(+). It participates in nucleotide-sugar biosynthesis; GDP-L-fucose biosynthesis via de novo pathway; GDP-L-fucose from GDP-alpha-D-mannose: step 2/2. In terms of biological role, catalyzes the two-step NADP-dependent conversion of GDP-4-dehydro-6-deoxy-D-mannose to GDP-fucose, involving an epimerase and a reductase reaction. The chain is GDP-L-fucose synthase from Homo sapiens (Human).